The primary structure comprises 145 residues: Putative phosphatidylglycerol/phosphatidylinositol transfer protein DDB_G0282179 (145 aa).

Positions 1-20 are cleaved as a signal peptide; it reads MIKTILLLLINFMLILIVNG. The N-linked (GlcNAc...) asparagine glycan is linked to asparagine 134.

Belongs to the NPC2 family. In terms of assembly, monomer.

Functionally, catalyzes the intermembrane transfer of phosphatidylglycerol and phosphatidylinositol. This is Putative phosphatidylglycerol/phosphatidylinositol transfer protein DDB_G0282179 from Dictyostelium discoideum (Social amoeba).